A 439-amino-acid chain; its full sequence is Proline--tRNA ligase (439 aa).

Belongs to the class-II aminoacyl-tRNA synthetase family. ProS type 2 subfamily. As to quaternary structure, homodimer.

The protein localises to the cytoplasm. The catalysed reaction is tRNA(Pro) + L-proline + ATP = L-prolyl-tRNA(Pro) + AMP + diphosphate. Functionally, catalyzes the attachment of proline to tRNA(Pro) in a two-step reaction: proline is first activated by ATP to form Pro-AMP and then transferred to the acceptor end of tRNA(Pro). This Beijerinckia indica subsp. indica (strain ATCC 9039 / DSM 1715 / NCIMB 8712) protein is Proline--tRNA ligase.